Consider the following 473-residue polypeptide: 3-isopropylmalate dehydratase large subunit (473 aa).

Positions 348, 408, and 411 each coordinate [4Fe-4S] cluster. The interval 421 to 440 (GDEASASSSNRNFIGRQGSK) is disordered.

The protein belongs to the aconitase/IPM isomerase family. LeuC type 1 subfamily. In terms of assembly, heterodimer of LeuC and LeuD. It depends on [4Fe-4S] cluster as a cofactor.

The catalysed reaction is (2R,3S)-3-isopropylmalate = (2S)-2-isopropylmalate. It participates in amino-acid biosynthesis; L-leucine biosynthesis; L-leucine from 3-methyl-2-oxobutanoate: step 2/4. Its function is as follows. Catalyzes the isomerization between 2-isopropylmalate and 3-isopropylmalate, via the formation of 2-isopropylmaleate. The protein is 3-isopropylmalate dehydratase large subunit of Haloferax volcanii (strain ATCC 29605 / DSM 3757 / JCM 8879 / NBRC 14742 / NCIMB 2012 / VKM B-1768 / DS2) (Halobacterium volcanii).